The following is a 51-amino-acid chain: Small ribosomal subunit protein eS31 (51 aa).

Zn(2+) is bound by residues C22, C25, C40, and C43. The C4-type zinc-finger motif lies at 22-43; the sequence is CVRCSHGIFMADHGDRYACGRC.

It belongs to the eukaryotic ribosomal protein eS31 family. As to quaternary structure, part of the 30S ribosomal subunit. Requires Zn(2+) as cofactor.

The sequence is that of Small ribosomal subunit protein eS31 from Methanosphaera stadtmanae (strain ATCC 43021 / DSM 3091 / JCM 11832 / MCB-3).